Consider the following 223-residue polypeptide: Endonuclease NucS (223 aa).

It belongs to the NucS endonuclease family.

It is found in the cytoplasm. Cleaves both 3' and 5' ssDNA extremities of branched DNA structures. This is Endonuclease NucS from Streptomyces griseus subsp. griseus (strain JCM 4626 / CBS 651.72 / NBRC 13350 / KCC S-0626 / ISP 5235).